We begin with the raw amino-acid sequence, 193 residues long: Peptide deformylase (193 aa).

Fe cation contacts are provided by cysteine 111 and histidine 155. Residue glutamate 156 is part of the active site. Residue histidine 159 coordinates Fe cation.

This sequence belongs to the polypeptide deformylase family. The cofactor is Fe(2+).

The catalysed reaction is N-terminal N-formyl-L-methionyl-[peptide] + H2O = N-terminal L-methionyl-[peptide] + formate. Functionally, removes the formyl group from the N-terminal Met of newly synthesized proteins. Requires at least a dipeptide for an efficient rate of reaction. N-terminal L-methionine is a prerequisite for activity but the enzyme has broad specificity at other positions. The sequence is that of Peptide deformylase from Mycoplasma genitalium (strain ATCC 33530 / DSM 19775 / NCTC 10195 / G37) (Mycoplasmoides genitalium).